Reading from the N-terminus, the 731-residue chain is SUN domain-containing protein 2 (731 aa).

Disordered stretches follow at residues Met-1–Ser-69 and Ser-106–Ser-142. The LMNA-binding stretch occupies residues Met-1–Leu-128. At Met-1 to Ser-226 the chain is on the nuclear side. Ser-12 carries the phosphoserine modification. Positions Gly-18–Gly-33 are enriched in low complexity. Ser-39 and Ser-55 each carry phosphoserine. A Phosphothreonine modification is found at Thr-117. Residues Ser-120, Ser-123, and Ser-147 each carry the phosphoserine modification. Residues Phe-227–Phe-247 form a helical membrane-spanning segment. Topologically, residues Tyr-248–His-731 are perinuclear space. 2 coiled-coil regions span residues Gln-396–Glu-452 and Arg-486–Arg-519. Positions Ala-521–His-731 are sufficient for interaction with SYNE1 and SYNE2. In terms of domain architecture, SUN spans Gly-569–Ala-730. Asn-650 is a glycosylation site (N-linked (GlcNAc...) asparagine).

In terms of assembly, core component of the LINC complex which is composed of inner nuclear membrane SUN domain-containing proteins coupled to outer nuclear membrane KASH domain-containing nesprins. SUN and KASH domain-containing proteins seem to bind each other promiscuously; however, differentially expression of LINC complex constituents is giving rise to specific assemblies. At least SUN1/2-containing core LINC complexes are proposed to be hexameric composed of three protomers of each KASH and SUN domain-containing protein. Interacts with SYNE2; the SUN2:SYNE2/KASH2 LINC complex is a heterohexamer; the homotrimeric cloverleave-like conformation of the SUN domain is a prerequisite for LINC complex formation in which three separate SYNE2/KASH2 peptides bind at the interface of adjacent SUN domains. Component of a probable SUN2:KASH5 LINC complex. Interacts with SYNE1 and SYNE3; probably forming respective LINC complexes. Interacts with A-type lamin. Interaction with lamins B1 and C is hardly detectable. Interacts with EMD. Interacts with RAB5A. Interacts with TMEM43 and TMEM201. Interacts with IRAG2. In terms of processing, the disulfide bond with SYNE2 is required for stability of the SUN2:SYNE2/KASH2 LINC complex under tensile forces though not required for the interaction. The disulfide bond is proposed to be conserved in LINC complexes involved in force transmission. Highly expressed in heart, placenta and muscle.

It localises to the nucleus inner membrane. The protein localises to the nucleus envelope. It is found in the endosome membrane. Functionally, as a component of the LINC (LInker of Nucleoskeleton and Cytoskeleton) complex, involved in the connection between the nuclear lamina and the cytoskeleton. The nucleocytoplasmic interactions established by the LINC complex play an important role in the transmission of mechanical forces across the nuclear envelope and in nuclear movement and positioning. Specifically, SYNE2 and SUN2 assemble in arrays of transmembrane actin-associated nuclear (TAN) lines which are bound to F-actin cables and couple the nucleus to retrograde actin flow during actin-dependent nuclear movement. Required for interkinetic nuclear migration (INM) and essential for nucleokinesis and centrosome-nucleus coupling during radial neuronal migration in the cerebral cortex and during glial migration. Required for nuclear migration in retinal photoreceptor progenitors implicating association with cytoplasmic dynein-dynactin and kinesin motor complexes, and probably B-type lamins; SUN1 and SUN2 seem to act redundantly. The SUN1/2:KASH5 LINC complex couples telomeres to microtubules during meiosis; SUN1 and SUN2 seem to act at least partial redundantly. Anchors chromosome movement in the prophase of meiosis and is involved in selective gene expression of coding and non-coding RNAs needed for gametogenesis. Required for telomere attachment to nuclear envelope and gametogenesis. May also function on endocytic vesicles as a receptor for Rab5-GDP and participate in the activation of Rab5. The polypeptide is SUN domain-containing protein 2 (Mus musculus (Mouse)).